The following is an 855-amino-acid chain: Valine--tRNA ligase (855 aa).

Residues 44 to 54 (PNVTGVLHIGH) carry the 'HIGH' region motif. The 'KMSKS' region motif lies at 524-528 (KMSKT). Position 527 (K527) interacts with ATP. Residues 797 to 827 (KVEEDPARKQKEREQLEKNIANSKRQLGDEV) adopt a coiled-coil conformation.

The protein belongs to the class-I aminoacyl-tRNA synthetase family. ValS type 1 subfamily. In terms of assembly, monomer.

It is found in the cytoplasm. The enzyme catalyses tRNA(Val) + L-valine + ATP = L-valyl-tRNA(Val) + AMP + diphosphate. In terms of biological role, catalyzes the attachment of valine to tRNA(Val). As ValRS can inadvertently accommodate and process structurally similar amino acids such as threonine, to avoid such errors, it has a 'posttransfer' editing activity that hydrolyzes mischarged Thr-tRNA(Val) in a tRNA-dependent manner. The polypeptide is Valine--tRNA ligase (Solibacter usitatus (strain Ellin6076)).